We begin with the raw amino-acid sequence, 713 residues long: Putative ERAD-associated E3 ubiquitin-protein ligase component (713 aa).

An N-terminal signal peptide occupies residues 1–20 (MQLLNFLICLFFIFKRCVFT). 2 N-linked (GlcNAc...) asparagine glycosylation sites follow: Asn48 and Asn123. Sel1-like repeat units follow at residues 83-124 (PESQ…TQNY) and 125-160 (TYAL…HQIS). Asn211 is a glycosylation site (N-linked (GlcNAc...) asparagine). Sel1-like repeat units follow at residues 212 to 248 (ISAH…RLVN), 280 to 315 (SIAA…SLNH), 490 to 525 (IHSL…AIHP), and 527 to 562 (ALAY…MHDT). Asn314 is a glycosylation site (N-linked (GlcNAc...) asparagine). The disordered stretch occupies residues 621–655 (QLPPEPPTLQVDRTPQQPDPQETSESLPSPNTEEM). The span at 631-652 (VDRTPQQPDPQETSESLPSPNT) shows a compositional bias: polar residues. The helical transmembrane segment at 671 to 691 (GRFLETACVTLIVVVVGLVLM) threads the bilayer.

The protein belongs to the sel-1 family.

Its subcellular location is the endoplasmic reticulum membrane. Its function is as follows. Component of the endoplasmic reticulum quality control (ERQC) system involved in ubiquitin-dependent degradation of missfolded endoplasmic reticulum proteins. This is Putative ERAD-associated E3 ubiquitin-protein ligase component from Schizosaccharomyces pombe (strain 972 / ATCC 24843) (Fission yeast).